A 775-amino-acid chain; its full sequence is Endothelin-converting enzyme-like 1 (775 aa).

Residues 1–59 (MEPPYSLTAHYDEFQEVKYVSRCGAGGARGASLPPGFPLGAARSATGARSGLPRWNRRE) are Cytoplasmic-facing. A helical; Signal-anchor for type II membrane protein transmembrane segment spans residues 60-82 (VCLLSGLVFAAGLCAILAAMLAL). Topologically, residues 83–775 (KYLGPVAAGG…MNPAHKCSVW (693 aa)) are lumenal. Residues 98 to 775 (GCPERKAFAR…MNPAHKCSVW (678 aa)) enclose the Peptidase M13 domain. 4 cysteine pairs are disulfide-bonded: C123–C760, C131–C720, C187–C441, and C649–C772. 2 N-linked (GlcNAc...) asparagine glycosylation sites follow: N255 and N322. H612 contributes to the Zn(2+) binding site. The active site involves E613. Position 616 (H616) interacts with Zn(2+). N-linked (GlcNAc...) asparagine glycosylation is present at N656. Residue E672 participates in Zn(2+) binding. Catalysis depends on D676, which acts as the Proton donor.

Belongs to the peptidase M13 family. The cofactor is Zn(2+). Post-translationally, N-glycosylated. Highly expressed in the CNS, in particular in putamen, spinal cord, medulla and subthalamic nucleus. A strong signal was also detected in uterine subepithelial cells and around renal blood vessels. Detected at lower levels in amygdala, caudate, thalamus, pancreas and skeletal muscle. Detected at very low levels in substantia nigra, cerebellum, cortex, corpus callosum and hippocampus.

It localises to the membrane. Its function is as follows. May contribute to the degradation of peptide hormones and be involved in the inactivation of neuronal peptides. The sequence is that of Endothelin-converting enzyme-like 1 (ECEL1) from Homo sapiens (Human).